Reading from the N-terminus, the 475-residue chain is Protein ABCI7, chloroplastic (475 aa).

A chloroplast-targeting transit peptide spans 1–36; it reads MAAATVLGRLSLIPNLSSKPKLKSNRRTTSTSVSVR.

Interacts with NAP7.

The protein localises to the plastid. It localises to the chloroplast. The polypeptide is Protein ABCI7, chloroplastic (ABCI7) (Arabidopsis thaliana (Mouse-ear cress)).